The primary structure comprises 83 residues: Small ribosomal subunit protein eS27 (83 aa).

The C4-type zinc finger occupies 37-59 (CSGCFKISTVFSHATTVVVCVGC).

Belongs to the eukaryotic ribosomal protein eS27 family. Zn(2+) serves as cofactor.

The polypeptide is Small ribosomal subunit protein eS27 (rps-27) (Caenorhabditis elegans).